We begin with the raw amino-acid sequence, 131 residues long: Arsenate reductase (131 aa).

Residues Cys10, Cys82, and Cys89 each act as nucleophile in the active site. 2 disulfide bridges follow: Cys10-Cys82 and Cys82-Cys89.

The protein belongs to the low molecular weight phosphotyrosine protein phosphatase family. Thioredoxin-coupled ArsC subfamily.

The protein localises to the cytoplasm. It catalyses the reaction arsenate + [thioredoxin]-dithiol + H(+) = arsenite + [thioredoxin]-disulfide + H2O. Functionally, catalyzes the reduction of arsenate [As(V)] to arsenite [As(III)]. This chain is Arsenate reductase, found in Staphylococcus aureus (strain COL).